The chain runs to 374 residues: Ribosomal RNA large subunit methyltransferase G (374 aa).

The protein belongs to the methyltransferase superfamily. RlmG family.

It is found in the cytoplasm. The enzyme catalyses guanosine(1835) in 23S rRNA + S-adenosyl-L-methionine = N(2)-methylguanosine(1835) in 23S rRNA + S-adenosyl-L-homocysteine + H(+). Its function is as follows. Specifically methylates the guanine in position 1835 (m2G1835) of 23S rRNA. The sequence is that of Ribosomal RNA large subunit methyltransferase G from Photobacterium profundum (strain SS9).